A 449-amino-acid polypeptide reads, in one-letter code: MLNYTGLENKDVLVVGLAKSGYEAAKLLIKLGANVTVNDGKDLSQDPHAKDLEALGVKIVDGGHPLSLLDNEPIIVKNPGIPYTVSIIQEAYQRHLKILTEVELSYLISEAPIIAITGTNGKTTTSSLIGDMFKKSRLTGRLSGNIGYVASKVAQETSPNEYLITELSSFQLLGVEQYRPHIAIITNIYSAHLDYHETLENYQNAKKQIYKNQTENDYLICNYHQRHLIESENLKAKTLYFSTQQEVDGIYIKDGFIVYQGIRIINIDDLVLPGEHNLENILAAVLASILAGVPIKAIIDSLTTFSGIDHRLQYIGTNRTNKYYNDSKATNTLATQFALNSFKQPIVWLCGGLDRGNDFDELIPYMKNVRVMVVFGQTQEKFAKLGNSQGKLVVKATDIEDAVKKVQDVVEPNDVVLLSPACASWDQYKTFEERGERFIESFRAHLPSY.

ATP is bound at residue glycine 118–threonine 124.

This sequence belongs to the MurCDEF family.

The protein resides in the cytoplasm. The catalysed reaction is UDP-N-acetyl-alpha-D-muramoyl-L-alanine + D-glutamate + ATP = UDP-N-acetyl-alpha-D-muramoyl-L-alanyl-D-glutamate + ADP + phosphate + H(+). Its pathway is cell wall biogenesis; peptidoglycan biosynthesis. Functionally, cell wall formation. Catalyzes the addition of glutamate to the nucleotide precursor UDP-N-acetylmuramoyl-L-alanine (UMA). The protein is UDP-N-acetylmuramoylalanine--D-glutamate ligase of Staphylococcus haemolyticus (strain JCSC1435).